Here is a 426-residue protein sequence, read N- to C-terminus: Cdc25-like protein phosphatase twine (426 aa).

The interval 1-27 is disordered; it reads MASKRLMLDVEEEDDESGACGQENFDP. One can recognise a Rhodanese domain in the interval 265 to 371; it reads SQGGYEIIDC…FFGLYSQLCQ (107 aa). Residue Cys-318 is part of the active site.

It belongs to the MPI phosphatase family. Expressed in developing male and female germ cells.

The enzyme catalyses O-phospho-L-tyrosyl-[protein] + H2O = L-tyrosyl-[protein] + phosphate. Its function is as follows. Required during meiosis. Regulates the transition from the extended G2 phase to the onset of the first meiotic division. The protein is Cdc25-like protein phosphatase twine (twe) of Drosophila melanogaster (Fruit fly).